The chain runs to 88 residues: Large ribosomal subunit protein bL31B (88 aa).

This sequence belongs to the bacterial ribosomal protein bL31 family. Type B subfamily. In terms of assembly, part of the 50S ribosomal subunit.

This chain is Large ribosomal subunit protein bL31B, found in Paraburkholderia xenovorans (strain LB400).